Consider the following 198-residue polypeptide: IMP cyclohydrolase (198 aa).

Belongs to the archaeal IMP cyclohydrolase family.

It catalyses the reaction IMP + H2O = 5-formamido-1-(5-phospho-D-ribosyl)imidazole-4-carboxamide. Its pathway is purine metabolism; IMP biosynthesis via de novo pathway; IMP from 5-formamido-1-(5-phospho-D-ribosyl)imidazole-4-carboxamide: step 1/1. In terms of biological role, catalyzes the cyclization of 5-formylamidoimidazole-4-carboxamide ribonucleotide to IMP. This Methanopyrus kandleri (strain AV19 / DSM 6324 / JCM 9639 / NBRC 100938) protein is IMP cyclohydrolase.